We begin with the raw amino-acid sequence, 286 residues long: Phospholipase A1 (286 aa).

The first 20 residues, 1 to 20 (MRISLACLAALCALPAGVMA), serve as a signal peptide directing secretion. Topologically, residues 21 to 49 (QDASVHDKPAVRGSIIANLLQDHDNPFLL) are periplasmic. The chain crosses the membrane as a beta stranded span at residues 50–62 (YPYESNYLLYTWT). Topologically, residues 63–81 (SDLNKEAIRSYDWAENARK) are extracellular. A beta stranded membrane pass occupies residues 82–96 (DEVKFQLSLAFPLWR). Residues 97-102 (GILGDN) are Periplasmic-facing. Residues 103 to 115 (SLLGASYTQKSWW) traverse the membrane as a beta stranded segment. Topologically, residues 116 to 125 (QLSNSKESAP) are extracellular. Residue S123 participates in Ca(2+) binding. A beta stranded transmembrane segment spans residues 126-145 (FRETNYEPQLFLGFATDYQF). The Periplasmic segment spans residues 146 to 147 (AG). A beta stranded transmembrane segment spans residues 148–161 (WTLRDIEMGYNHDS). H159 functions as the Proton acceptor in the catalytic mechanism. The active-site Nucleophile is the S161. At 162 to 170 (NGRSDPTSR) the chain is on the extracellular side. Residues R164 and S169 each contribute to the Ca(2+) site. The beta stranded transmembrane segment at 171–183 (SWNRLYARLMAQN) threads the bilayer. Topologically, residues 184–185 (GN) are periplasmic. Residues 186–195 (WLVEVKPWYV) traverse the membrane as a beta stranded segment. Residues 196 to 213 (VGSTDDNPDITKYMGYYR) are Extracellular-facing. A Ca(2+)-binding site is contributed by D201. A beta stranded transmembrane segment spans residues 214 to 220 (LKVGYQL). The Periplasmic segment spans residues 221 to 222 (GE). A beta stranded transmembrane segment spans residues 223–231 (AILSAQGQY). Residues 232-238 (NWNTGYG) lie on the Extracellular side of the membrane. A beta stranded membrane pass occupies residues 239 to 247 (GAELGVSYP). Residues 248–252 (ITKHV) lie on the Periplasmic side of the membrane. Residues 253–262 (RAYTQIYSGY) form a beta stranded membrane-spanning segment. Topologically, residues 263-271 (GESLIDYNF) are extracellular. The beta stranded transmembrane segment at 272-283 (NQTRVGVGLMLN) threads the bilayer. The Periplasmic portion of the chain corresponds to 284–286 (DLF).

It belongs to the phospholipase A1 family. In terms of assembly, homodimer; dimerization is reversible, and the dimeric form is the active one. It depends on Ca(2+) as a cofactor.

It is found in the cell outer membrane. It catalyses the reaction a 1,2-diacyl-sn-glycero-3-phosphocholine + H2O = a 2-acyl-sn-glycero-3-phosphocholine + a fatty acid + H(+). The catalysed reaction is a 1,2-diacyl-sn-glycero-3-phosphocholine + H2O = a 1-acyl-sn-glycero-3-phosphocholine + a fatty acid + H(+). In terms of biological role, hydrolysis of phosphatidylcholine with phospholipase A2 (EC 3.1.1.4) and phospholipase A1 (EC 3.1.1.32) activities. This is Phospholipase A1 (pldA) from Klebsiella pneumoniae.